The following is a 124-amino-acid chain: Fluoride-specific ion channel FluC 2 (124 aa).

Helical transmembrane passes span 8–28, 34–54, 60–80, and 93–113; these read LPNQ…GALV, NDLL…GLPF, LLLG…MVEC, and LGLI…GFLI. Positions 68 and 71 each coordinate Na(+).

Belongs to the fluoride channel Fluc/FEX (TC 1.A.43) family.

It localises to the cell inner membrane. It catalyses the reaction fluoride(in) = fluoride(out). With respect to regulation, na(+) is not transported, but it plays an essential structural role and its presence is essential for fluoride channel function. Fluoride-specific ion channel. Important for reducing fluoride concentration in the cell, thus reducing its toxicity. The protein is Fluoride-specific ion channel FluC 2 of Prochlorococcus marinus (strain MIT 9313).